The chain runs to 362 residues: Heme A synthase (362 aa).

Helical transmembrane passes span Leu-10–Val-30, Val-102–Gly-122, Leu-128–Ser-148, Val-159–Leu-179, and Ala-198–Leu-218. Residue His-262 coordinates heme. A run of 3 helical transmembrane segments spans residues Ala-266–Gly-286, Leu-297–Ile-317, and Ser-318–Ala-338. Heme is bound at residue His-323.

Belongs to the COX15/CtaA family. Type 2 subfamily. As to quaternary structure, interacts with CtaB. Heme b is required as a cofactor.

It is found in the cell membrane. It catalyses the reaction Fe(II)-heme o + 2 A + H2O = Fe(II)-heme a + 2 AH2. The protein operates within porphyrin-containing compound metabolism; heme A biosynthesis; heme A from heme O: step 1/1. Its function is as follows. Catalyzes the conversion of heme O to heme A by two successive hydroxylations of the methyl group at C8. The first hydroxylation forms heme I, the second hydroxylation results in an unstable dihydroxymethyl group, which spontaneously dehydrates, resulting in the formyl group of heme A. The chain is Heme A synthase from Bradyrhizobium sp. (strain BTAi1 / ATCC BAA-1182).